A 932-amino-acid chain; its full sequence is Probable UDP-N-acetylglucosamine--peptide N-acetylglucosaminyltransferase SPINDLY (932 aa).

Positions 1–15 are enriched in basic and acidic residues; it reads MAWTEKDVENGKESD. The disordered stretch occupies residues 1-39; the sequence is MAWTEKDVENGKESDSLGNNGFLKGVQSSSDSKGSPVRI. 11 TPR repeats span residues 48 to 81, 82 to 115, 116 to 149, 157 to 190, 191 to 224, 225 to 258, 266 to 299, 300 to 333, 334 to 367, 369 to 401, and 402 to 435; these read GKDA…DSGS, IESL…DPQN, ACAL…DPSY, AIVL…DSHY, APAY…RPMY, AEAY…SPNF, AIAL…NWHY, ADAM…NPHC, AEAC…KPNF, QSLN…NPTY, and AEAY…DPDS. The catalytic region stretch occupies residues 436–932; it reads RNAGQNRLLA…NQAGNPGKQS (497 aa). A disordered region spans residues 881 to 902; sequence VSPIEKTRISASKDGPIKENGF.

The protein belongs to the glycosyltransferase 41 family. O-GlcNAc transferase subfamily. Expressed in stems, leaves and flowers. Expressed during all stages of corolla maturation.

The protein localises to the nucleus. The catalysed reaction is L-seryl-[protein] + UDP-N-acetyl-alpha-D-glucosamine = 3-O-(N-acetyl-beta-D-glucosaminyl)-L-seryl-[protein] + UDP + H(+). It carries out the reaction L-threonyl-[protein] + UDP-N-acetyl-alpha-D-glucosamine = 3-O-(N-acetyl-beta-D-glucosaminyl)-L-threonyl-[protein] + UDP + H(+). The protein operates within protein modification; protein glycosylation. Probable O-linked N-acetylglucosamine transferase (OGT) involved in various processes such as gibberellin (GA) signaling pathway. OGTs catalyze the addition of nucleotide-activated sugars directly onto the polypeptide through O-glycosidic linkage with the hydroxyl of serine or threonine. Probably acts by adding O-linked sugars to yet unknown proteins. The polypeptide is Probable UDP-N-acetylglucosamine--peptide N-acetylglucosaminyltransferase SPINDLY (SPY) (Petunia hybrida (Petunia)).